A 186-amino-acid polypeptide reads, in one-letter code: Lipoprotein signal peptidase (186 aa).

A run of 4 helical transmembrane segments spans residues 8–28 (FFSVFKPGYLAFVAFGLFLDL), 44–64 (IPVLGDFFRLSLTFNTGFVFG), 66–86 (FQDNALPSLFATGFAIVFLIF), and 97–117 (AWGWNFVMAGAFGNFLDKFFV). Active-site residues include aspartate 142 and aspartate 164. Residues 157–177 (WPAFNVADSCVSIGIVILLFT) traverse the membrane as a helical segment.

This sequence belongs to the peptidase A8 family.

The protein localises to the cell inner membrane. It catalyses the reaction Release of signal peptides from bacterial membrane prolipoproteins. Hydrolyzes -Xaa-Yaa-Zaa-|-(S,diacylglyceryl)Cys-, in which Xaa is hydrophobic (preferably Leu), and Yaa (Ala or Ser) and Zaa (Gly or Ala) have small, neutral side chains.. Its pathway is protein modification; lipoprotein biosynthesis (signal peptide cleavage). Functionally, this protein specifically catalyzes the removal of signal peptides from prolipoproteins. This is Lipoprotein signal peptidase from Leptospira biflexa serovar Patoc (strain Patoc 1 / ATCC 23582 / Paris).